The primary structure comprises 386 residues: Alanine racemase (386 aa).

The Proton acceptor; specific for D-alanine role is filled by lysine 38. An N6-(pyridoxal phosphate)lysine modification is found at lysine 38. Residue arginine 136 coordinates substrate. Catalysis depends on tyrosine 267, which acts as the Proton acceptor; specific for L-alanine. A substrate-binding site is contributed by methionine 315.

It belongs to the alanine racemase family. Pyridoxal 5'-phosphate is required as a cofactor.

It catalyses the reaction L-alanine = D-alanine. It participates in amino-acid biosynthesis; D-alanine biosynthesis; D-alanine from L-alanine: step 1/1. Catalyzes the interconversion of L-alanine and D-alanine. May also act on other amino acids. In Clostridium perfringens (strain ATCC 13124 / DSM 756 / JCM 1290 / NCIMB 6125 / NCTC 8237 / Type A), this protein is Alanine racemase (alr).